Consider the following 1074-residue polypeptide: Probable phospholipid-transporting ATPase tat-5 (1074 aa).

Positions 1–26 (MGKRKKNDESSSSSSQKPCVSSSSDD) are disordered. Over residues 10-26 (SSSSSSQKPCVSSSSDD) the composition is skewed to low complexity. 4 helical membrane passes run 118-138 (FVPI…FLLM), 143-163 (FIPA…GFVL), 354-374 (LTKL…AMKG), and 378-398 (LWYR…PISL). D442 serves as the catalytic 4-aspartylphosphate intermediate. ATP is bound by residues D442, K443, T444, E524, F570, K575, K594, R623, T624, T704, G705, D706, R786, and K792. D442 serves as a coordination point for Mg(2+). A Mg(2+)-binding site is contributed by T444. Residue D813 coordinates Mg(2+). Residues N816 and D817 each coordinate ATP. D817 lines the Mg(2+) pocket. 5 helical membrane-spanning segments follow: residues 886-906 (AIFS…VLMV), 954-974 (IWVL…LLVF), 978-998 (FIHV…IMVA), 1006-1026 (WAML…LILF), and 1038-1058 (WVFI…LYIV).

This sequence belongs to the cation transport ATPase (P-type) (TC 3.A.3) family. Type IV subfamily. Mg(2+) is required as a cofactor.

The protein resides in the cell membrane. The enzyme catalyses ATP + H2O + phospholipidSide 1 = ADP + phosphate + phospholipidSide 2.. Plays a role in regulating membrane trafficking of cargo proteins during embryogenesis. Regulates snx-3 retromer-mediated endosomal sorting of mig-14, a transporter of Wnt egl-20 morphogen. Together with mon-2 and pad-1, may participate in the formation of endosomal carriers that direct mig-14 trafficking back to Golgi, away from lysosomal degradation. Required for Wnt egl-20 gradient formation along the anteroposterior body axis and migration of QL neuroblast descendants toward the posterior part. Maintains phosphatidylethanolamine (PE) asymmetry at the cell membrane and prevents the budding of ectosome vesicles that affect intercellular communication and morphogenesis. This chain is Probable phospholipid-transporting ATPase tat-5 (tat-5), found in Caenorhabditis elegans.